The chain runs to 506 residues: Maturase K (506 aa).

The protein belongs to the intron maturase 2 family. MatK subfamily.

The protein localises to the plastid. It localises to the chloroplast. Its function is as follows. Usually encoded in the trnK tRNA gene intron. Probably assists in splicing its own and other chloroplast group II introns. This Phyllodoce empetriformis (Pink mountainheath) protein is Maturase K.